The sequence spans 135 residues: Small ribosomal subunit protein bS6 (135 aa).

The tract at residues 104–135 (FSRLDRNGHIGHDEKHPRSPSRQREDVIEGVE) is disordered.

This sequence belongs to the bacterial ribosomal protein bS6 family.

Binds together with bS18 to 16S ribosomal RNA. This chain is Small ribosomal subunit protein bS6, found in Bartonella henselae (strain ATCC 49882 / DSM 28221 / CCUG 30454 / Houston 1) (Rochalimaea henselae).